The chain runs to 299 residues: MSKTLSVDKSQLRSPWSTYWTLTKPKVVALMLLTSVVGMSLAPHEHFTWHQALIALVGIALMAGSAAAFNHLIDRRIDAKMARTYRRPLPKGDVSPFNVLLFALLIGSLGFLSLMLWVNSLTAYLTFASLLGYAAVYTLYLKRATPQNIVIAGIAGAMPPLLGWTSITGELHPHAWVLVMIIFIWTPPHFWALAIHRKEDYAKVNIPMLPVTHGVEYTKTSILLYAILLALVCMLPVLVGMASYLYLFSALVLNVCFVRYAIKLKFRAEERTAIEMFRFSIYFLLLLFCALLLDQQLAL.

The next 9 membrane-spanning stretches (helical) occupy residues Val27–Phe47, Leu53–Ile73, Phe97–Trp117, Leu121–Leu141, Ile149–Gly169, Ala175–Ile195, Ile222–Ala242, Tyr244–Leu264, and Ala273–Leu293.

This sequence belongs to the UbiA prenyltransferase family. Protoheme IX farnesyltransferase subfamily.

The protein resides in the cell inner membrane. The enzyme catalyses heme b + (2E,6E)-farnesyl diphosphate + H2O = Fe(II)-heme o + diphosphate. Its pathway is porphyrin-containing compound metabolism; heme O biosynthesis; heme O from protoheme: step 1/1. Converts heme B (protoheme IX) to heme O by substitution of the vinyl group on carbon 2 of heme B porphyrin ring with a hydroxyethyl farnesyl side group. This chain is Protoheme IX farnesyltransferase, found in Vibrio vulnificus (strain CMCP6).